Reading from the N-terminus, the 652-residue chain is Acetyl-coenzyme A synthetase (652 aa).

CoA contacts are provided by residues 189–192 and Thr-311; that span reads RGDK. ATP contacts are provided by residues 387–389, 411–416, Asp-500, and Arg-515; these read GEP and DTWWQT. A CoA-binding site is contributed by Ser-523. Arg-526 contacts ATP. Residues His-539 and Val-542 each contribute to the Mg(2+) site. Arg-584 serves as a coordination point for CoA. N6-acetyllysine is present on Lys-609.

The protein belongs to the ATP-dependent AMP-binding enzyme family. Requires Mg(2+) as cofactor. Acetylated. Deacetylation by the SIR2-homolog deacetylase activates the enzyme.

It carries out the reaction acetate + ATP + CoA = acetyl-CoA + AMP + diphosphate. Catalyzes the conversion of acetate into acetyl-CoA (AcCoA), an essential intermediate at the junction of anabolic and catabolic pathways. AcsA undergoes a two-step reaction. In the first half reaction, AcsA combines acetate with ATP to form acetyl-adenylate (AcAMP) intermediate. In the second half reaction, it can then transfer the acetyl group from AcAMP to the sulfhydryl group of CoA, forming the product AcCoA. This is Acetyl-coenzyme A synthetase from Bartonella bacilliformis (strain ATCC 35685 / KC583 / Herrer 020/F12,63).